Here is a 474-residue protein sequence, read N- to C-terminus: MKKLTNDFGNIIADNQNSLSAGAKGPLLMQDYLLLEKLAHQNRERIPERTVHAKGSGAYGEIKITADLSAYTKAKIFQKGEVTPLFLRFSTVAGEAGAADAERDVRGFAIKFYTKEGNWDLVGNNTPTFFIRDAYKFPDFIHTQKRDPRTHLRSNNAAWDFWSLCPESLHQVTILMSDRGIPASYRHMHGFGSHTYSFINDKNERFWVKFHFKTQQGIKNLTNQEAAELIAKDRESHQRDLYNAIENKDFPKWKVQVQILAEKDIEKLGFNPFDLTKIWPHSFVPLMDIGEMILNKNPQNYFNEVEQAAFSPSNIVPGIGFSPDKMLQARIFSYPDAQRYRIGTNYHLLPVNRAKSEVNTYNVAGAMNFDSYKNDAAYYEPNSYDNSPKEDKSYLEPDLVLEGVAQRYAPLDNDFYTQPRALFNLMNDDQKTQLFHNIAASMEGVDEKIITRALKHFEKISPDYAKGIKKALEK.

Active-site residues include H52 and N124. Y334 serves as a coordination point for heme.

This sequence belongs to the catalase family. It depends on heme as a cofactor.

The enzyme catalyses 2 H2O2 = O2 + 2 H2O. In terms of biological role, decomposes hydrogen peroxide into water and oxygen; serves to protect cells from the toxic effects of hydrogen peroxide. The protein is Catalase (katA) of Campylobacter jejuni subsp. jejuni serotype O:2 (strain ATCC 700819 / NCTC 11168).